We begin with the raw amino-acid sequence, 156 residues long: MKFNDVYNKHHKIIHHLLKKYNISYNYDEYYQLLLIKMWQLSQIYKPSSNQSLSSFLFMRLNFYLIDLFRQQKRLNDIILCENHSPILTEQPTYFNEYDLRLQDVCALLNHRERQWLMLYLEGYKQYEIADIMSLSTSTIKLIKASVKRKCQRFFK.

Residues 29-44 carry the Polymerase core binding motif; the sequence is EYYQLLLIKMWQLSQI. A DNA-binding region (H-T-H motif) is located at residues 126-145; sequence QYEIADIMSLSTSTIKLIKA.

The protein belongs to the sigma-70 factor family.

In terms of biological role, sigma factors are initiation factors that promote the attachment of RNA polymerase to specific initiation sites and are then released. Sigma-S contributes to the protection against external stress, thus playing a role in cellular fitness and survival. The chain is RNA polymerase sigma factor SigS (sigS) from Staphylococcus aureus (strain MRSA252).